The chain runs to 223 residues: MHVLIPAAGSGSRMKAGRNKLLIELEGESLIFWTIKSVLSASLVSWVGIIGQPYDKQELLKSVKNFSNKIKWINGGDTRQKSVFNGLNSLPSTAEKVLIHDGARCLVGPDLINKCAMELEQNDAVILATKVTDTIKIVDNRGYIKETPNRQNLWAAQTPQGFLVKRLRKAHEMAIEKNWTVTDDASLFEMLNWQVKIIEGNSSNIKITSPLDLKIAKLFLKDF.

This sequence belongs to the IspD/TarI cytidylyltransferase family. IspD subfamily.

The enzyme catalyses 2-C-methyl-D-erythritol 4-phosphate + CTP + H(+) = 4-CDP-2-C-methyl-D-erythritol + diphosphate. The protein operates within isoprenoid biosynthesis; isopentenyl diphosphate biosynthesis via DXP pathway; isopentenyl diphosphate from 1-deoxy-D-xylulose 5-phosphate: step 2/6. In terms of biological role, catalyzes the formation of 4-diphosphocytidyl-2-C-methyl-D-erythritol from CTP and 2-C-methyl-D-erythritol 4-phosphate (MEP). The chain is 2-C-methyl-D-erythritol 4-phosphate cytidylyltransferase from Prochlorococcus marinus subsp. pastoris (strain CCMP1986 / NIES-2087 / MED4).